Here is a 451-residue protein sequence, read N- to C-terminus: Probable D-serine dehydratase (451 aa).

A disordered region spans residues 1–55 (MPGRTRPSCRLAITFTPRPDSATPRAGRAAPATGRRSNRSRSTLSATASPMPRRP). The segment covering 22-35 (ATPRAGRAAPATGR) has biased composition (low complexity). At K118 the chain carries N6-(pyridoxal phosphate)lysine.

The protein belongs to the serine/threonine dehydratase family. DsdA subfamily. Requires pyridoxal 5'-phosphate as cofactor.

It carries out the reaction D-serine = pyruvate + NH4(+). This Paracidovorax citrulli (strain AAC00-1) (Acidovorax citrulli) protein is Probable D-serine dehydratase.